The following is a 335-amino-acid chain: UDP-N-acetylglucosamine--N-acetylmuramyl-(pentapeptide) pyrophosphoryl-undecaprenol N-acetylglucosamine transferase (335 aa).

UDP-N-acetyl-alpha-D-glucosamine-binding positions include Thr9–Gly11, Asn123, Ser176, and Gln274.

It belongs to the glycosyltransferase 28 family. MurG subfamily.

It is found in the cell inner membrane. The enzyme catalyses di-trans,octa-cis-undecaprenyl diphospho-N-acetyl-alpha-D-muramoyl-L-alanyl-D-glutamyl-meso-2,6-diaminopimeloyl-D-alanyl-D-alanine + UDP-N-acetyl-alpha-D-glucosamine = di-trans,octa-cis-undecaprenyl diphospho-[N-acetyl-alpha-D-glucosaminyl-(1-&gt;4)]-N-acetyl-alpha-D-muramoyl-L-alanyl-D-glutamyl-meso-2,6-diaminopimeloyl-D-alanyl-D-alanine + UDP + H(+). It participates in cell wall biogenesis; peptidoglycan biosynthesis. Functionally, cell wall formation. Catalyzes the transfer of a GlcNAc subunit on undecaprenyl-pyrophosphoryl-MurNAc-pentapeptide (lipid intermediate I) to form undecaprenyl-pyrophosphoryl-MurNAc-(pentapeptide)GlcNAc (lipid intermediate II). This chain is UDP-N-acetylglucosamine--N-acetylmuramyl-(pentapeptide) pyrophosphoryl-undecaprenol N-acetylglucosamine transferase, found in Campylobacter fetus subsp. fetus (strain 82-40).